The chain runs to 368 residues: UDP-N-acetylglucosamine--N-acetylmuramyl-(pentapeptide) pyrophosphoryl-undecaprenol N-acetylglucosamine transferase (368 aa).

Residues 16–18 (TGG), Asn130, Arg171, Ser197, and Gln296 contribute to the UDP-N-acetyl-alpha-D-glucosamine site.

The protein belongs to the glycosyltransferase 28 family. MurG subfamily.

The protein resides in the cell inner membrane. The catalysed reaction is di-trans,octa-cis-undecaprenyl diphospho-N-acetyl-alpha-D-muramoyl-L-alanyl-D-glutamyl-meso-2,6-diaminopimeloyl-D-alanyl-D-alanine + UDP-N-acetyl-alpha-D-glucosamine = di-trans,octa-cis-undecaprenyl diphospho-[N-acetyl-alpha-D-glucosaminyl-(1-&gt;4)]-N-acetyl-alpha-D-muramoyl-L-alanyl-D-glutamyl-meso-2,6-diaminopimeloyl-D-alanyl-D-alanine + UDP + H(+). It functions in the pathway cell wall biogenesis; peptidoglycan biosynthesis. Cell wall formation. Catalyzes the transfer of a GlcNAc subunit on undecaprenyl-pyrophosphoryl-MurNAc-pentapeptide (lipid intermediate I) to form undecaprenyl-pyrophosphoryl-MurNAc-(pentapeptide)GlcNAc (lipid intermediate II). In Acidiphilium cryptum (strain JF-5), this protein is UDP-N-acetylglucosamine--N-acetylmuramyl-(pentapeptide) pyrophosphoryl-undecaprenol N-acetylglucosamine transferase.